A 450-amino-acid polypeptide reads, in one-letter code: Trigger factor (450 aa).

Residues 163 to 249 (EDFVLIDYQG…LKEIQEQILP (87 aa)) form the PPIase FKBP-type domain. The span at 431–443 (PEVETEVSESAAD) shows a compositional bias: acidic residues. Residues 431-450 (PEVETEVSESAADVEDKTDQ) are disordered.

The protein belongs to the FKBP-type PPIase family. Tig subfamily.

Its subcellular location is the cytoplasm. The catalysed reaction is [protein]-peptidylproline (omega=180) = [protein]-peptidylproline (omega=0). Its function is as follows. Involved in protein export. Acts as a chaperone by maintaining the newly synthesized protein in an open conformation. Functions as a peptidyl-prolyl cis-trans isomerase. The polypeptide is Trigger factor (Desulforapulum autotrophicum (strain ATCC 43914 / DSM 3382 / VKM B-1955 / HRM2) (Desulfobacterium autotrophicum)).